Reading from the N-terminus, the 183-residue chain is ATP synthase subunit b, chloroplastic (183 aa).

Residues 33-51 traverse the membrane as a helical segment; that stretch reads IINLSVVIGVVVSFGGDAL.

Belongs to the ATPase B chain family. F-type ATPases have 2 components, F(1) - the catalytic core - and F(0) - the membrane proton channel. F(1) has five subunits: alpha(3), beta(3), gamma(1), delta(1), epsilon(1). F(0) has four main subunits: a(1), b(1), b'(1) and c(10-14). The alpha and beta chains form an alternating ring which encloses part of the gamma chain. F(1) is attached to F(0) by a central stalk formed by the gamma and epsilon chains, while a peripheral stalk is formed by the delta, b and b' chains.

It is found in the plastid. The protein resides in the chloroplast thylakoid membrane. Functionally, f(1)F(0) ATP synthase produces ATP from ADP in the presence of a proton or sodium gradient. F-type ATPases consist of two structural domains, F(1) containing the extramembraneous catalytic core and F(0) containing the membrane proton channel, linked together by a central stalk and a peripheral stalk. During catalysis, ATP synthesis in the catalytic domain of F(1) is coupled via a rotary mechanism of the central stalk subunits to proton translocation. Component of the F(0) channel, it forms part of the peripheral stalk, linking F(1) to F(0). The polypeptide is ATP synthase subunit b, chloroplastic (Oltmannsiellopsis viridis (Marine flagellate)).